The sequence spans 490 residues: MEDSASASLSSAAATGTSTSTPAAPTARKQLDKEQVRKAVDALLTHCKSRKNNYGLLLNENESLFLMVVLWKIPSKELRVRLTLPHSIRSDSEDICLFTKDEPNSTPEKTEQFYRKLLNKHGIKTVSQIISLQTLKKEYKSYEAKLRLLSSFDFFLTDARIRRLLPSLIGRHFYQRKKVPVSVNLLSKNLSREINDCIGGTVLNISKSGSCSAIRIGHVGMQIEHIIENIVAVTKGLSEKLPEKWESVKLLFVKTEKSAALPIFSSFVSNWDEATKRSLLNKKKKEARRKRRERNFEKQKERKKKRQQARKTASVLSKDDVAPESGDTTVKKPESKKEQTPEHGKKKRGRGKAQVKATNESEDEIPQLVPIGKKTPANEKVEIQKHATGKKSPAKSPNPSTPRGKKRKALPASETPKAAESETPGKSPEKKPKIKEEAVKEKSPSLGKKDARQTPKKPEAKFFTTPSKSVRKASHTPKKWPKKPKVPQST.

Methionine 1 carries the post-translational modification N-acetylmethionine. The segment covering methionine 1–alanine 27 has biased composition (low complexity). Residues methionine 1–lysine 33 are disordered. Glycyl lysine isopeptide (Lys-Gly) (interchain with G-Cter in SUMO2) cross-links involve residues lysine 120 and lysine 254. Residues leucine 280–glutamate 293 are compositionally biased toward basic residues. The stretch at leucine 280–alanine 313 forms a coiled coil. A disordered region spans residues leucine 280–threonine 490. The span at threonine 329–histidine 343 shows a compositional bias: basic and acidic residues. Threonine 340 is subject to Phosphothreonine. A compositionally biased stretch (basic residues) spans glycine 344–alanine 353. Threonine 358 bears the Phosphothreonine mark. At serine 361 the chain carries Phosphoserine. Threonine 375 carries the phosphothreonine modification. Positions proline 376–lysine 385 are enriched in basic and acidic residues. Lysine 380 participates in a covalent cross-link: Glycyl lysine isopeptide (Lys-Gly) (interchain with G-Cter in SUMO2). Phosphoserine is present on residues serine 392 and serine 396. 2 positions are modified to phosphothreonine: threonine 415 and threonine 423. A Phosphoserine modification is found at serine 427. Residues serine 427–alanine 460 are compositionally biased toward basic and acidic residues. Residue lysine 435 forms a Glycyl lysine isopeptide (Lys-Gly) (interchain with G-Cter in SUMO2) linkage. Position 443 is a phosphoserine (serine 443). Lysine 461 is covalently cross-linked (Glycyl lysine isopeptide (Lys-Gly) (interchain with G-Cter in SUMO2)). At threonine 465 the chain carries Phosphothreonine. Residue lysine 468 is modified to N6-acetyllysine. The residue at position 469 (serine 469) is a Phosphoserine. Over residues serine 469 to threonine 490 the composition is skewed to basic residues.

It belongs to the universal ribosomal protein uL1 family. Highly divergent. Interacts with ING1 (isoform 2). Interacts with KPNA7 and KPNA2. As to expression, expressed at high intensities in the heart, skeletal muscle, and placenta.

It is found in the nucleus. The protein resides in the nucleolus. Regulates cellular senescence through inhibition of PTEN translation. Acts as a pro-apoptotic regulator in response to DNA damage. This chain is Ribosomal L1 domain-containing protein 1 (RSL1D1), found in Homo sapiens (Human).